Consider the following 603-residue polypeptide: Proline--tRNA ligase (603 aa).

Belongs to the class-II aminoacyl-tRNA synthetase family. ProS type 1 subfamily. In terms of assembly, homodimer.

The protein localises to the cytoplasm. It carries out the reaction tRNA(Pro) + L-proline + ATP = L-prolyl-tRNA(Pro) + AMP + diphosphate. Catalyzes the attachment of proline to tRNA(Pro) in a two-step reaction: proline is first activated by ATP to form Pro-AMP and then transferred to the acceptor end of tRNA(Pro). As ProRS can inadvertently accommodate and process non-cognate amino acids such as alanine and cysteine, to avoid such errors it has two additional distinct editing activities against alanine. One activity is designated as 'pretransfer' editing and involves the tRNA(Pro)-independent hydrolysis of activated Ala-AMP. The other activity is designated 'posttransfer' editing and involves deacylation of mischarged Ala-tRNA(Pro). The misacylated Cys-tRNA(Pro) is not edited by ProRS. This Arthrobacter sp. (strain FB24) protein is Proline--tRNA ligase.